The following is a 145-amino-acid chain: 3-hydroxyacyl-[acyl-carrier-protein] dehydratase FabZ (145 aa).

The active site involves His47.

It belongs to the thioester dehydratase family. FabZ subfamily.

It is found in the cytoplasm. It carries out the reaction a (3R)-hydroxyacyl-[ACP] = a (2E)-enoyl-[ACP] + H2O. Its function is as follows. Involved in unsaturated fatty acids biosynthesis. Catalyzes the dehydration of short chain beta-hydroxyacyl-ACPs and long chain saturated and unsaturated beta-hydroxyacyl-ACPs. This Acidovorax sp. (strain JS42) protein is 3-hydroxyacyl-[acyl-carrier-protein] dehydratase FabZ.